Consider the following 718-residue polypeptide: Serine/threonine-protein kinase PAK 5 (718 aa).

Disordered stretches follow at residues 1–29 (MFGK…DPQE), 96–119 (RSNS…IQGH), 226–245 (SPLD…TSRC), 264–296 (YDRR…QEPM), and 339–371 (VFSP…SSSH). In terms of domain architecture, CRIB spans 11–24 (ISGPSNFEHRVHTG). The interval 25 to 447 (FDPQEQKFTG…VVSPGDPREY (423 aa)) is linker. A Phosphoserine modification is found at serine 104. Phosphothreonine is present on threonine 107. Residues 226–244 (SPLDYSFQLTPSRTAGTSR) show a composition bias toward polar residues. Residues 359–371 (QSQSKVGYSSSSH) show a composition bias toward low complexity. The 252-residue stretch at 448–699 (LDNFIKIGEG…AQELLGHPFL (252 aa)) folds into the Protein kinase domain. ATP-binding positions include 454–462 (IGEGSTGIV) and lysine 477. Aspartate 567 (proton acceptor) is an active-site residue.

Belongs to the protein kinase superfamily. STE Ser/Thr protein kinase family. STE20 subfamily. As to quaternary structure, interacts tightly with GTP-bound but not GDP-bound CDC42/p21 and RAC1. Interacts with MARK2, leading to inhibit MARK2 independently of kinase activity. Interacts with RHOD and RHOH. Post-translationally, autophosphorylated when activated by CDC42/p21.

The protein resides in the mitochondrion. It is found in the cytoplasm. Its subcellular location is the nucleus. It carries out the reaction L-seryl-[protein] + ATP = O-phospho-L-seryl-[protein] + ADP + H(+). The enzyme catalyses L-threonyl-[protein] + ATP = O-phospho-L-threonyl-[protein] + ADP + H(+). Serine/threonine protein kinase that plays a role in a variety of different signaling pathways including cytoskeleton regulation, cell migration, proliferation or cell survival. Activation by various effectors including growth factor receptors or active CDC42 and RAC1 results in a conformational change and a subsequent autophosphorylation on several serine and/or threonine residues. Phosphorylates the proto-oncogene RAF and stimulates its kinase activity. Promotes cell survival by phosphorylating the BCL2 antagonist of cell death BAD. Phosphorylates CTNND1, probably to regulate cytoskeletal organization and cell morphology. Keeps microtubules stable through MARK2 inhibition and destabilizes the F-actin network leading to the disappearance of stress fibers and focal adhesions. This chain is Serine/threonine-protein kinase PAK 5 (Pak5), found in Rattus norvegicus (Rat).